Consider the following 320-residue polypeptide: ATP-dependent 6-phosphofructokinase (320 aa).

Residue Gly-12 coordinates ATP. ADP-binding positions include 22–26 (RGVVR) and 55–60 (RYSVSD). ATP is bound by residues 73-74 (RF) and 103-106 (GDGS). Asp-104 contributes to the Mg(2+) binding site. Residue 126-128 (TID) participates in substrate binding. The active-site Proton acceptor is the Asp-128. Arg-155 is a binding site for ADP. Substrate-binding positions include Arg-163 and 170-172 (MGR). Residues 186 to 188 (GCE), Lys-212, and 214 to 216 (KKH) contribute to the ADP site. Residues Glu-223, Arg-244, and 250 to 253 (HIQR) contribute to the substrate site.

It belongs to the phosphofructokinase type A (PFKA) family. ATP-dependent PFK group I subfamily. Prokaryotic clade 'B1' sub-subfamily. In terms of assembly, homotetramer. Requires Mg(2+) as cofactor.

Its subcellular location is the cytoplasm. It catalyses the reaction beta-D-fructose 6-phosphate + ATP = beta-D-fructose 1,6-bisphosphate + ADP + H(+). Its pathway is carbohydrate degradation; glycolysis; D-glyceraldehyde 3-phosphate and glycerone phosphate from D-glucose: step 3/4. With respect to regulation, allosterically activated by ADP and other diphosphonucleosides, and allosterically inhibited by phosphoenolpyruvate. Its function is as follows. Catalyzes the phosphorylation of D-fructose 6-phosphate to fructose 1,6-bisphosphate by ATP, the first committing step of glycolysis. This Sodalis glossinidius (strain morsitans) protein is ATP-dependent 6-phosphofructokinase.